The sequence spans 704 residues: Protein NBR1 homolog (704 aa).

Residue M1 is modified to N-acetylmethionine. The PB1 domain occupies 7–92 (ALVVKVSYGG…KFLKINVNAG (86 aa)). 3 stretches are compositionally biased toward polar residues: residues 95 to 108 (TNSAAPESSGSSTP), 171 to 189 (PQESSPCSPVTKPGSSGAS), and 223 to 233 (HSKTSGHVPNS). Disordered stretches follow at residues 95 to 114 (TNSAAPESSGSSTPAGMPNP) and 171 to 233 (PQES…VPNS). A ZZ-type; degenerate zinc finger spans residues 286–336 (HKGIRCDGCGVLPITGPRFKSKVKEDYDLCTICYSVMGNEGDYTRMDKPVS). Zn(2+) is bound by residues C291, C294, C315, and C318. The UBA domain occupies 657-701 (GVSEWDPILEELQEMGFCDDVTNKRLLKKNNGSIKGVVMDLLTGE). The short motif at 661–664 (WDPI) is the LIR element.

Homodimer. Interacts with ATG8A, ATG8B, ATG8C, ATG8D, ATG8F and ATG8I. Binds to ubiquitin.

Its subcellular location is the cytoplasm. It localises to the vacuole. Its function is as follows. Autophagic substrate degraded in the vacuole by non-selective autophagy. Requires ATG8 protein expression to be recognized as an autophagic substrate. Acts probably as a receptor for autophagosomal degradation of ubiquitinated proteins. Targets ubiquitinated protein aggregates derived from denatured or damaged non-native proteins generated under stress conditions. Functions additively with the E3 ubiquitin-protein ligase CHIP for autophagosomal degradation of proteotoxic aggregates formed under stress conditions. The sequence is that of Protein NBR1 homolog from Arabidopsis thaliana (Mouse-ear cress).